The following is a 585-amino-acid chain: UvrABC system protein C (585 aa).

A GIY-YIG domain is found at 15-90; sequence AEPGVYQFLE…IKRHQPRYNV (76 aa). A UVR domain is found at 198–233; sequence GILADPLRQEMQAAATAEEFERAANIRDRLAVIESF.

Belongs to the UvrC family. As to quaternary structure, interacts with UvrB in an incision complex.

It localises to the cytoplasm. In terms of biological role, the UvrABC repair system catalyzes the recognition and processing of DNA lesions. UvrC both incises the 5' and 3' sides of the lesion. The N-terminal half is responsible for the 3' incision and the C-terminal half is responsible for the 5' incision. This is UvrABC system protein C from Haloquadratum walsbyi (strain DSM 16790 / HBSQ001).